Reading from the N-terminus, the 398-residue chain is NADH dehydrogenase [ubiquinone] iron-sulfur protein 2 (398 aa).

[4Fe-4S] cluster contacts are provided by Cys-261, Cys-267, and Cys-282.

The protein belongs to the complex I 49 kDa subunit family. In terms of assembly, complex I is composed of about 45 different subunits. This is a component of the iron-sulfur (IP) fragment of the enzyme. Requires [4Fe-4S] cluster as cofactor.

The protein localises to the mitochondrion. It carries out the reaction a ubiquinone + NADH + 5 H(+)(in) = a ubiquinol + NAD(+) + 4 H(+)(out). Core subunit of the mitochondrial membrane respiratory chain NADH dehydrogenase (Complex I) that is believed to belong to the minimal assembly required for catalysis. Complex I functions in the transfer of electrons from NADH to the respiratory chain. The immediate electron acceptor for the enzyme is believed to be ubiquinone. Component of the iron-sulfur (IP) fragment of the enzyme. This Nephroselmis olivacea (Green alga) protein is NADH dehydrogenase [ubiquinone] iron-sulfur protein 2 (NAD7).